The primary structure comprises 155 residues: Protein-export protein SecB 1 (155 aa).

The protein belongs to the SecB family. As to quaternary structure, homotetramer, a dimer of dimers. One homotetramer interacts with 1 SecA dimer.

Its subcellular location is the cytoplasm. One of the proteins required for the normal export of preproteins out of the cell cytoplasm. It is a molecular chaperone that binds to a subset of precursor proteins, maintaining them in a translocation-competent state. It also specifically binds to its receptor SecA. This chain is Protein-export protein SecB 1, found in Polaromonas naphthalenivorans (strain CJ2).